The chain runs to 354 residues: Guanine nucleotide-binding protein G(t) subunit alpha-3 (354 aa).

The segment at 1–27 (MGSGISSESKESAKRSKELEKKLQEDA) is disordered. Gly2 carries the N-myristoyl glycine lipid modification. The span at 8-27 (ESKESAKRSKELEKKLQEDA) shows a compositional bias: basic and acidic residues. The G-alpha domain occupies 32-354 (RTVKLLLLGA…KENLKDCGLF (323 aa)). Positions 35-48 (KLLLLGAGESGKST) are G1 motif. GTP contacts are provided by residues 40–47 (GAGESGKS), 175–181 (LHSRVKT), 200–204 (DVGGQ), 269–272 (NKKD), and Ala326. Mg(2+) is bound by residues Ser47 and Thr181. A G2 motif region spans residues 173–181 (DVLHSRVKT). The G3 motif stretch occupies residues 196–205 (FRMFDVGGQR). The G4 motif stretch occupies residues 265–272 (VLFLNKKD). The G5 motif stretch occupies residues 324–329 (TCATDT).

The protein belongs to the G-alpha family. G(i/o/t/z) subfamily. As to quaternary structure, g proteins are composed of 3 units; alpha, beta and gamma, respectively GNAT3, GNB1 and GNG13 for Gustducin heterotrimer for bitter taste transduction. The alpha chain contains the guanine nucleotide binding site. Component of the TAS2R14-GNAT3 complex, consisting of TAS2R14, GNAT3, GNB1 and GNG2; within the complex interacts with TAS2R14; this complex plays a role in the perception of bitterness. Gustducin heterotrimer may also be composed of GNAT3, GNB3 and GNG13. In terms of processing, potential N-myristoylation may anchor alpha-subunit to the inner surface of plasma membrane. As to expression, expressed in taste buds (sensory organs of clustered epithelial cells) of the circumvallate and foliate papillae of the tongue at protein level. Expressed in enteroendocrine L cells of the gut. Detected also in spermatozoa.

The protein localises to the cytoplasm. Its function is as follows. Guanine nucleotide-binding protein (G protein) alpha subunit playing a prominent role in bitter and sweet taste transduction as well as in umami (monosodium glutamate, monopotassium glutamate, and inosine monophosphate) taste transduction. Transduction by this alpha subunit involves coupling of specific cell-surface receptors with a cGMP-phosphodiesterase; Activation of phosphodiesterase lowers intracellular levels of cAMP and cGMP which may open a cyclic nucleotide-suppressible cation channel leading to influx of calcium, ultimately leading to release of neurotransmitter. Indeed, denatonium and strychnine induce transient reduction in cAMP and cGMP in taste tissue, whereas this decrease is inhibited by GNAT3 antibody. Gustducin heterotrimer transduces response to bitter and sweet compounds via regulation of phosphodiesterase for alpha subunit, as well as via activation of phospholipase C for beta and gamma subunits, with ultimate increase inositol trisphosphate and increase of intracellular Calcium. GNAT3 can functionally couple to taste receptors to transmit intracellular signal: receptor heterodimer TAS1R2/TAS1R3 senses sweetness and TAS1R1/TAS1R3 transduces umami taste, whereas the T2R family GPCRs such as TAS2R14 act as bitter sensors. Also functions as lumenal sugar sensors in the gut to control the expression of the Na+-glucose transporter SGLT1 in response to dietaty sugar, as well as the secretion of Glucagon-like peptide-1, GLP-1 and glucose-dependent insulinotropic polypeptide, GIP. Thus, may modulate the gut capacity to absorb sugars, with implications in malabsorption syndromes and diet-related disorders including diabetes and obesity. This chain is Guanine nucleotide-binding protein G(t) subunit alpha-3 (GNAT3), found in Homo sapiens (Human).